Here is a 550-residue protein sequence, read N- to C-terminus: Glucose-6-phosphate isomerase 1 (550 aa).

The Proton donor role is filled by glutamate 358. Residues histidine 389 and lysine 513 contribute to the active site.

It belongs to the GPI family.

It localises to the cytoplasm. It carries out the reaction alpha-D-glucose 6-phosphate = beta-D-fructose 6-phosphate. The protein operates within carbohydrate biosynthesis; gluconeogenesis. Its pathway is carbohydrate degradation; glycolysis; D-glyceraldehyde 3-phosphate and glycerone phosphate from D-glucose: step 2/4. Its function is as follows. Catalyzes the reversible isomerization of glucose-6-phosphate to fructose-6-phosphate. This chain is Glucose-6-phosphate isomerase 1, found in Streptomyces coelicolor (strain ATCC BAA-471 / A3(2) / M145).